A 30-amino-acid polypeptide reads, in one-letter code: Bacteriocin curvaticin (30 aa).

Cys-9 and Cys-14 are joined by a disulfide.

It is found in the secreted. Its function is as follows. Has antibacterial activity against the Gram-positive bacterium L.monocytogenes. This chain is Bacteriocin curvaticin, found in Latilactobacillus curvatus (Lactobacillus curvatus).